The following is a 616-amino-acid chain: Prolactin receptor (616 aa).

The signal sequence occupies residues 1–24 (MKENVASMIVFLLLLFLNIRLLKG). Topologically, residues 25 to 234 (QSPPGKPFIF…QIPNDFTMKD (210 aa)) are extracellular. 2 Fibronectin type-III domains span residues 27–128 (PPGK…VEPD) and 129–229 (PPVN…IPND). Residues Cys-36 and Cys-46 are joined by a disulfide bond. An N-linked (GlcNAc...) asparagine glycan is attached at Asn-59. An intrachain disulfide couples Cys-75 to Cys-86. 2 N-linked (GlcNAc...) asparagine glycosylation sites follow: Asn-104 and Asn-132. Positions 211 and 212 each coordinate Zn(2+). The WSXWS motif signature appears at 215–219 (WSVWS). Residues 235–258 (ITVWIFVAVLSTIICLIMVWAVAL) form a helical membrane-spanning segment. Residues 259–616 (KGYSMVTCIF…DPACFMHSLH (358 aa)) lie on the Cytoplasmic side of the membrane. The Box 1 motif signature appears at 267–275 (IFPPVPGPK). Disordered stretches follow at residues 326-375 (MPAH…STFH), 454-492 (QSSK…PKEK), and 568-593 (ESTK…STAP). A compositionally biased stretch (basic and acidic residues) spans 463-482 (GEEKATKQREVESSHSKAEQ).

Belongs to the type I cytokine receptor family. Type 1 subfamily. As to quaternary structure, interacts with SMARCA1. Interacts with NEK3 and VAV2 and this interaction is prolactin-dependent.

The protein localises to the membrane. This is a receptor for the anterior pituitary hormone prolactin. In Oryctolagus cuniculus (Rabbit), this protein is Prolactin receptor (PRLR).